The primary structure comprises 338 residues: Fructose-1,6-bisphosphatase class 1 (338 aa).

Glutamate 92, aspartate 115, leucine 117, and aspartate 118 together coordinate Mg(2+). Residues 118–121 (DGSS), asparagine 211, tyrosine 244, 262–264 (YLY), and lysine 274 each bind substrate. Glutamate 280 is a Mg(2+) binding site.

It belongs to the FBPase class 1 family. As to quaternary structure, homotetramer. Mg(2+) is required as a cofactor.

It is found in the cytoplasm. The catalysed reaction is beta-D-fructose 1,6-bisphosphate + H2O = beta-D-fructose 6-phosphate + phosphate. It functions in the pathway carbohydrate biosynthesis; gluconeogenesis. The protein is Fructose-1,6-bisphosphatase class 1 of Vibrio vulnificus (strain YJ016).